A 166-amino-acid chain; its full sequence is MSSAIELKKQIVAEIAEKFRASKSTVIVDYRGLNVAEVTELRKRLREAGVEFKVYKNTLTRRALAEVGLEGLNDVFTGPNAIAFSKEDVVAPAKILSEFAKDHEALEIKAGVIEGNIATLEEINALAKLPSREGLLSMLLSVLQAPIRNFALVAKAVADKKEEQSA.

This sequence belongs to the universal ribosomal protein uL10 family. As to quaternary structure, part of the ribosomal stalk of the 50S ribosomal subunit. The N-terminus interacts with L11 and the large rRNA to form the base of the stalk. The C-terminus forms an elongated spine to which L12 dimers bind in a sequential fashion forming a multimeric L10(L12)X complex.

Its function is as follows. Forms part of the ribosomal stalk, playing a central role in the interaction of the ribosome with GTP-bound translation factors. This is Large ribosomal subunit protein uL10 from Geobacillus sp. (strain WCH70).